Consider the following 270-residue polypeptide: 4-hydroxy-tetrahydrodipicolinate reductase (270 aa).

NAD(+)-binding positions include 8–13 (GALGRM), D34, 102–104 (GTT), and 128–131 (SQNY). H160 acts as the Proton donor/acceptor in catalysis. Position 161 (H161) interacts with (S)-2,3,4,5-tetrahydrodipicolinate. K164 serves as the catalytic Proton donor. A (S)-2,3,4,5-tetrahydrodipicolinate-binding site is contributed by 170–171 (GT).

The protein belongs to the DapB family.

It localises to the cytoplasm. It catalyses the reaction (S)-2,3,4,5-tetrahydrodipicolinate + NAD(+) + H2O = (2S,4S)-4-hydroxy-2,3,4,5-tetrahydrodipicolinate + NADH + H(+). The catalysed reaction is (S)-2,3,4,5-tetrahydrodipicolinate + NADP(+) + H2O = (2S,4S)-4-hydroxy-2,3,4,5-tetrahydrodipicolinate + NADPH + H(+). The protein operates within amino-acid biosynthesis; L-lysine biosynthesis via DAP pathway; (S)-tetrahydrodipicolinate from L-aspartate: step 4/4. In terms of biological role, catalyzes the conversion of 4-hydroxy-tetrahydrodipicolinate (HTPA) to tetrahydrodipicolinate. This chain is 4-hydroxy-tetrahydrodipicolinate reductase, found in Methanococcus maripaludis (strain C6 / ATCC BAA-1332).